Reading from the N-terminus, the 411-residue chain is Serine hydroxymethyltransferase (411 aa).

Residues leucine 119 and 123-125 (GHL) each bind (6S)-5,6,7,8-tetrahydrofolate. N6-(pyridoxal phosphate)lysine is present on lysine 228. 351–353 (SPF) contributes to the (6S)-5,6,7,8-tetrahydrofolate binding site.

It belongs to the SHMT family. Homodimer. Pyridoxal 5'-phosphate is required as a cofactor.

Its subcellular location is the cytoplasm. It catalyses the reaction (6R)-5,10-methylene-5,6,7,8-tetrahydrofolate + glycine + H2O = (6S)-5,6,7,8-tetrahydrofolate + L-serine. Its pathway is one-carbon metabolism; tetrahydrofolate interconversion. It participates in amino-acid biosynthesis; glycine biosynthesis; glycine from L-serine: step 1/1. Catalyzes the reversible interconversion of serine and glycine with tetrahydrofolate (THF) serving as the one-carbon carrier. This reaction serves as the major source of one-carbon groups required for the biosynthesis of purines, thymidylate, methionine, and other important biomolecules. Also exhibits THF-independent aldolase activity toward beta-hydroxyamino acids, producing glycine and aldehydes, via a retro-aldol mechanism. The sequence is that of Serine hydroxymethyltransferase from Clostridium botulinum (strain Eklund 17B / Type B).